The primary structure comprises 671 residues: UvrABC system protein B (671 aa).

Residues 31 to 189 form the Helicase ATP-binding domain; the sequence is KGFEEGKKEQ…QLVDIQFDRN (159 aa). 44–51 is a binding site for ATP; it reads GATGTGKT. Residues 97–120 carry the Beta-hairpin motif; that stretch reads YYDYYQPEAYVPSTDTYIEKDSAI. Residues 437 to 599 enclose the Helicase C-terminal domain; the sequence is QIDDLVGEIN…ITPKTIIKPI (163 aa). In terms of domain architecture, UVR spans 634 to 669; the sequence is KELVANLRSQMQAAAKKLDFEQAASLRDTILELQAD.

This sequence belongs to the UvrB family. In terms of assembly, forms a heterotetramer with UvrA during the search for lesions. Interacts with UvrC in an incision complex.

It localises to the cytoplasm. Functionally, the UvrABC repair system catalyzes the recognition and processing of DNA lesions. A damage recognition complex composed of 2 UvrA and 2 UvrB subunits scans DNA for abnormalities. Upon binding of the UvrA(2)B(2) complex to a putative damaged site, the DNA wraps around one UvrB monomer. DNA wrap is dependent on ATP binding by UvrB and probably causes local melting of the DNA helix, facilitating insertion of UvrB beta-hairpin between the DNA strands. Then UvrB probes one DNA strand for the presence of a lesion. If a lesion is found the UvrA subunits dissociate and the UvrB-DNA preincision complex is formed. This complex is subsequently bound by UvrC and the second UvrB is released. If no lesion is found, the DNA wraps around the other UvrB subunit that will check the other stand for damage. The protein is UvrABC system protein B of Lacticaseibacillus casei (strain BL23) (Lactobacillus casei).